We begin with the raw amino-acid sequence, 455 residues long: Na(+)/H(+) antiporter NhaA (455 aa).

The next 11 membrane-spanning stretches (helical) occupy residues 31–51 (ASGILLIVSTAAALVWANSPW), 83–103 (GLMSIFFFLVGLEIKREVLIG), 113–133 (FPLIAAVGGTVVPAVIYLLCV), 141–161 (GWGIPMATDIAFALGVLILLG), 170–190 (VFVTALAIVDDIIAVLVIALF), 198–218 (VSLLVALGGVGIAFGFNLLGI), 231–251 (IWAAVLKSGVHATVAGVLLAF), 309–329 (GLQPWVSFLIMPLFAFSNAGV), 345–365 (IGVALGLFLGKPLGIWLFAWL), 383–403 (IFGASWICGIGFTMSLFIASL), and 414–434 (SKIGTLAASLVAGVCGSVVLW).

It belongs to the NhaA Na(+)/H(+) (TC 2.A.33) antiporter family.

The protein localises to the cell inner membrane. It carries out the reaction Na(+)(in) + 2 H(+)(out) = Na(+)(out) + 2 H(+)(in). Na(+)/H(+) antiporter that extrudes sodium in exchange for external protons. The chain is Na(+)/H(+) antiporter NhaA from Koribacter versatilis (strain Ellin345).